Reading from the N-terminus, the 545-residue chain is Cleavage and polyadenylation specificity factor subunit 6 (545 aa).

A disordered region spans residues 37–69; it reads ISPSANNGDAPEDRDYLDSLPAPGGNEGSKGAP. One can recognise an RRM domain in the interval 81 to 161; sequence IALYIGNLTW…QNPIVTPCNK (81 aa). The span at 165-180 shows a compositional bias: polar residues; it reads SQFEMQSRKSTQSGQM. Disordered regions lie at residues 165–404 and 478–545; these read SQFE…PLSE and YGSV…YRHR. Over residues 184 to 200 the composition is skewed to gly residues; the sequence is GKAGPPGSGSRGGGFPP. 4 stretches are compositionally biased toward pro residues: residues 220–230, 237–265, 287–363, and 372–383; these read PVGPGGPPPHF, PRLPSGPPGPLGPPGPPPPGQGLPPPLGG, PMGP…PPGN, and GPPPGDPYGRPP. 2 stretches are compositionally biased toward basic and acidic residues: residues 384 to 397 and 483 to 497; these read PYDRDFPGGRDMDA and GRRERSRERDHSRSR. Over residues 498 to 508 the composition is skewed to basic residues; it reads EKSRRHKSRSR. Positions 509–545 are enriched in basic and acidic residues; that stretch reads DRHEDYYRERSRERDRHRERDRDRERDREREREYRHR.

This sequence belongs to the RRM CPSF6/7 family. As to quaternary structure, component of the cleavage factor Im (CFIm) complex.

It localises to the nucleus. The protein localises to the nucleoplasm. Its subcellular location is the nucleus speckle. The protein resides in the cytoplasm. Component of the cleavage factor Im (CFIm) complex that functions as an activator of the pre-mRNA 3'-end cleavage and polyadenylation processing required for the maturation of pre-mRNA into functional mRNAs. CFIm contributes to the recruitment of multiprotein complexes on specific sequences on the pre-mRNA 3'-end, so called cleavage and polyadenylation signals (pA signals). Most pre-mRNAs contain multiple pA signals, resulting in alternative cleavage and polyadenylation (APA) producing mRNAs with variable 3'-end formation. The CFIm complex acts as a key regulator of cleavage and polyadenylation site choice during APA through its binding to 5'-UGUA-3' elements localized in the 3'-untranslated region (UTR) for a huge number of pre-mRNAs. Plays a role in mRNA export. The chain is Cleavage and polyadenylation specificity factor subunit 6 from Danio rerio (Zebrafish).